The primary structure comprises 146 residues: UPF0306 protein CKO_04548 (146 aa).

It belongs to the UPF0306 family.

This is UPF0306 protein CKO_04548 from Citrobacter koseri (strain ATCC BAA-895 / CDC 4225-83 / SGSC4696).